The primary structure comprises 29 residues: U-homostoxin-Hdu1a (29 aa).

The O-linked (GlcNAc...) threonine glycan is linked to Thr1. 2 disulfides stabilise this stretch: Cys7-Cys19 and Cys10-Cys25.

The protein belongs to the sea anemone BBH family.

The protein localises to the secreted. Its subcellular location is the nematocyst. In Homostichanthus duerdeni (Sea anemone), this protein is U-homostoxin-Hdu1a.